The primary structure comprises 341 residues: Foldase protein PrsA (341 aa).

Positions 1 to 22 (MKNIGRLAVTALIAVFIFSVTG) are cleaved as a signal peptide. Cys23 carries the N-palmitoyl cysteine lipid modification. Cys23 is lipidated: S-diacylglycerol cysteine. The PpiC domain occupies 199–291 (PNKMHLAHIL…FGYHIIKCIK (93 aa)).

This sequence belongs to the PrsA family.

It is found in the cell membrane. The catalysed reaction is [protein]-peptidylproline (omega=180) = [protein]-peptidylproline (omega=0). Functionally, plays a major role in protein secretion by helping the post-translocational extracellular folding of several secreted proteins. The protein is Foldase protein PrsA of Clostridium kluyveri (strain NBRC 12016).